A 122-amino-acid chain; its full sequence is Large ribosomal subunit protein uL14 (122 aa).

It belongs to the universal ribosomal protein uL14 family. Part of the 50S ribosomal subunit. Forms a cluster with proteins L3 and L19. In the 70S ribosome, L14 and L19 interact and together make contacts with the 16S rRNA in bridges B5 and B8.

Its function is as follows. Binds to 23S rRNA. Forms part of two intersubunit bridges in the 70S ribosome. This is Large ribosomal subunit protein uL14 from Brevibacillus brevis (strain 47 / JCM 6285 / NBRC 100599).